The sequence spans 136 residues: Keratin-associated protein 9-3 (136 aa).

11 tandem repeats follow at residues 3-7 (CCATS), 21-25 (CCQPT), 31-35 (CCQPS), 36-40 (CCEAS), 41-45 (CCQPS), 46-50 (CCETG), 87-91 (CCVVS), 97-101 (CCQLH), 107-111 (CCRPS), 117-121 (CCRPA), and 126-130 (CCQPS). Positions 21–130 (CCQPTCTQSS…ACCCYCCQPS (110 aa)) are 11 X 5 AA repeats of C-C-[AEQVR]-[ALPTV]-[AGHST].

The protein belongs to the KRTAP type 9 family. As to quaternary structure, interacts with hair keratins.

Its function is as follows. In the hair cortex, hair keratin intermediate filaments are embedded in an interfilamentous matrix, consisting of hair keratin-associated proteins (KRTAP), which are essential for the formation of a rigid and resistant hair shaft through their extensive disulfide bond cross-linking with abundant cysteine residues of hair keratins. The matrix proteins include the high-sulfur and high-glycine-tyrosine keratins. The sequence is that of Keratin-associated protein 9-3 from Mus musculus (Mouse).